The chain runs to 119 residues: Protein yippee-like 2 (119 aa).

A Yippee domain is found at 19–116; the sequence is RTYSCIHCRA…IELAHMIKDN (98 aa). Zn(2+) contacts are provided by Cys-23, Cys-26, Cys-79, and Cys-82.

It belongs to the yippee family. May interact with FAM168B.

Its subcellular location is the nucleus. The protein resides in the nucleolus. This chain is Protein yippee-like 2 (YPEL2), found in Chlorocebus aethiops (Green monkey).